A 301-amino-acid polypeptide reads, in one-letter code: Thymidylate synthase (301 aa).

DUMP-binding positions include arginine 38 and 163-164 (RR). Cysteine 183 serves as the catalytic Nucleophile. DUMP is bound by residues 203-206 (RSGD), asparagine 214, and 244-246 (HIY). Aspartate 206 contacts (6R)-5,10-methylene-5,6,7,8-tetrahydrofolate. Alanine 300 provides a ligand contact to (6R)-5,10-methylene-5,6,7,8-tetrahydrofolate.

The protein belongs to the thymidylate synthase family. In terms of assembly, homodimer.

The enzyme catalyses dUMP + (6R)-5,10-methylene-5,6,7,8-tetrahydrofolate = 7,8-dihydrofolate + dTMP. It participates in pyrimidine metabolism; dTTP biosynthesis. Catalyzes the reductive methylation of deoxyuridylate to thymidylate. In Varicella-zoster virus (strain Dumas) (HHV-3), this protein is Thymidylate synthase.